Here is a 312-residue protein sequence, read N- to C-terminus: Isochorismatase (312 aa).

The Carrier domain occupies Val-229–Ser-302. O-(pantetheine 4'-phosphoryl)serine is present on Ser-263.

It belongs to the isochorismatase family.

It carries out the reaction isochorismate + H2O = (2S,3S)-2,3-dihydroxy-2,3-dihydrobenzoate + pyruvate. The protein operates within siderophore biosynthesis; bacillibactin biosynthesis. The polypeptide is Isochorismatase (dhbB) (Bacillus subtilis (strain 168)).